A 361-amino-acid polypeptide reads, in one-letter code: Septin-2 (361 aa).

Phosphotyrosine is present on Y17. In terms of domain architecture, Septin-type G spans 34–306 (KGFEFTLMVV…ENFRSERLKR (273 aa)). Positions 44–51 (GESGLGKS) are G1 motif. Residues 44–52 (GESGLGKST), T78, G104, and 183–186 (KADT) contribute to the GTP site. The G3 motif stretch occupies residues 101–104 (DTPG). The interval 182 to 185 (AKAD) is G4 motif. K190 carries the post-translational modification N6-acetyllysine. Residue Y211 is modified to Phosphotyrosine. At S218 the chain carries Phosphoserine. GTP is bound by residues G241, R256, and Y258. Residues 260–270 (WGVVEVENPEH) form an important for dimerization region.

It belongs to the TRAFAC class TrmE-Era-EngA-EngB-Septin-like GTPase superfamily. Septin GTPase family. As to quaternary structure, septins polymerize into heterooligomeric protein complexes that form filaments, and associate with cellular membranes, actin filaments and microtubules. GTPase activity is required for filament formation. Septin filaments are assembled from asymmetrical heterotrimers, composed of SEPTIN2, SEPTIN6 and SEPTIN7 that associate head-to-head to form a hexameric unit. Interaction between SEPTIN2 and SEPTIN7 seems indirect. Also interacts with SEPTIN9 and SEPTIN5. Interaction with SEPTIN4 not detected. Component of a septin core octameric complex consisting of SEPTIN12, SEPTIN7, SEPTIN6 and SEPTIN2 or SEPTIN4 in the order 12-7-6-2-2-6-7-12 or 12-7-6-4-4-6-7-12 and located in the sperm annulus. Interacts with MAP4. Interacts with DZIP1L. As to expression, widely expressed.

Its subcellular location is the cytoplasm. The protein resides in the cytoskeleton. The protein localises to the spindle. It is found in the chromosome. It localises to the centromere. Its subcellular location is the kinetochore. The protein resides in the cleavage furrow. The protein localises to the midbody. It is found in the cell cortex. It localises to the cell projection. Its subcellular location is the cilium membrane. The protein resides in the cilium. The protein localises to the flagellum. In terms of biological role, filament-forming cytoskeletal GTPase. Forms a filamentous structure with SEPTIN12, SEPTIN6, SEPTIN2 and probably SEPTIN4 at the sperm annulus which is required for the structural integrity and motility of the sperm tail during postmeiotic differentiation. Required for normal organization of the actin cytoskeleton. Plays a role in the biogenesis of polarized columnar-shaped epithelium by maintaining polyglutamylated microtubules, thus facilitating efficient vesicle transport, and by impeding MAP4 binding to tubulin. Required for the progression through mitosis. Forms a scaffold at the midplane of the mitotic splindle required to maintain CENPE localization at kinetochores and consequently chromosome congression. During anaphase, may be required for chromosome segregation and spindle elongation. Plays a role in ciliogenesis and collective cell movements. In cilia, required for the integrity of the diffusion barrier at the base of the primary cilium that prevents diffusion of transmembrane proteins between the cilia and plasma membranes: probably acts by regulating the assembly of the tectonic-like complex (also named B9 complex) by localizing TMEM231 protein. This chain is Septin-2, found in Mus musculus (Mouse).